Reading from the N-terminus, the 345-residue chain is Anthranilate phosphoribosyltransferase (345 aa).

5-phospho-alpha-D-ribose 1-diphosphate contacts are provided by residues G88, 91 to 92, T96, 98 to 101, 116 to 124, and S128; these read GD, NIST, and KHGNRSASG. G88 provides a ligand contact to anthranilate. S100 is a binding site for Mg(2+). N119 is an anthranilate binding site. Position 174 (R174) interacts with anthranilate. Residues D233 and E234 each coordinate Mg(2+).

Belongs to the anthranilate phosphoribosyltransferase family. Homodimer. It depends on Mg(2+) as a cofactor.

It catalyses the reaction N-(5-phospho-beta-D-ribosyl)anthranilate + diphosphate = 5-phospho-alpha-D-ribose 1-diphosphate + anthranilate. Its pathway is amino-acid biosynthesis; L-tryptophan biosynthesis; L-tryptophan from chorismate: step 2/5. Catalyzes the transfer of the phosphoribosyl group of 5-phosphorylribose-1-pyrophosphate (PRPP) to anthranilate to yield N-(5'-phosphoribosyl)-anthranilate (PRA). This Prochlorococcus marinus (strain NATL1A) protein is Anthranilate phosphoribosyltransferase.